We begin with the raw amino-acid sequence, 229 residues long: Large ribosomal subunit protein uL1 (229 aa).

Belongs to the universal ribosomal protein uL1 family. In terms of assembly, part of the 50S ribosomal subunit.

In terms of biological role, binds directly to 23S rRNA. The L1 stalk is quite mobile in the ribosome, and is involved in E site tRNA release. Its function is as follows. Protein L1 is also a translational repressor protein, it controls the translation of the L11 operon by binding to its mRNA. In Clostridium botulinum (strain 657 / Type Ba4), this protein is Large ribosomal subunit protein uL1.